The sequence spans 470 residues: Pancreatic lipase-related protein 2 (470 aa).

The signal sequence occupies residues 1–18; the sequence is MMLFVWTTGLLLLATARG. A disulfide bond links cysteine 22 and cysteine 28. The interval 94 to 106 is required for galactolipase activity; sequence IHGFIDNGEKDWL. An intrachain disulfide couples cysteine 110 to cysteine 121. The Nucleophile role is filled by serine 172. The active-site Charge relay system is aspartate 196. Residues glutamate 207, arginine 210, aspartate 212, and aspartate 215 each coordinate Ca(2+). Residues cysteine 257 and cysteine 281 are joined by a disulfide bond. A required for galactolipase activity region spans residues 258–280; sequence EKNIISTIVDVNGFLEGITSLAA. Histidine 283 serves as the catalytic Charge relay system. Cystine bridges form between cysteine 305–cysteine 316 and cysteine 319–cysteine 324. Residues asparagine 354 and asparagine 429 are each glycosylated (N-linked (GlcNAc...) asparagine). Positions 358-470 constitute a PLAT domain; that stretch reads WRYKVSVTLS…EDVLQSLSPC (113 aa). A disulfide bridge links cysteine 454 with cysteine 470.

Belongs to the AB hydrolase superfamily. Lipase family. Pancreas.

It localises to the secreted. Its subcellular location is the zymogen granule membrane. The protein localises to the cell projection. The protein resides in the neuron projection. It catalyses the reaction a triacylglycerol + H2O = a diacylglycerol + a fatty acid + H(+). It carries out the reaction a 1,2-diacyl-3-O-(beta-D-galactosyl)-sn-glycerol + 2 H2O = 3-beta-D-galactosyl-sn-glycerol + 2 a fatty acid + 2 H(+). The enzyme catalyses 1,2,3-tri-(9Z-octadecenoyl)-glycerol + H2O = di-(9Z)-octadecenoylglycerol + (9Z)-octadecenoate + H(+). The catalysed reaction is di-(9Z)-octadecenoylglycerol + H2O = (9Z-octadecenoyl)-glycerol + (9Z)-octadecenoate + H(+). It catalyses the reaction (9Z-octadecenoyl)-glycerol + H2O = glycerol + (9Z)-octadecenoate + H(+). It carries out the reaction 1-(9Z-octadecenoyl)-glycerol + H2O = glycerol + (9Z)-octadecenoate + H(+). The enzyme catalyses 1,2,3-tripropanoylglycerol + H2O = dipropanoylglycerol + propanoate + H(+). The catalysed reaction is 1,2,3-tributanoylglycerol + H2O = dibutanoylglycerol + butanoate + H(+). It catalyses the reaction 1,2,3-trioctanoylglycerol + H2O = dioctanoylglycerol + octanoate + H(+). It carries out the reaction 1,2-didecanoylglycerol + H2O = decanoylglycerol + decanoate + H(+). The enzyme catalyses long chain 1,2-diacyl-3-O-beta-D-galactosyl-sn-glycerol + H2O = long chain acyl-3-O-beta-D-galactosyl-sn-glycerol + a fatty acid + H(+). The catalysed reaction is 1,2-dioctanoyl-3-O-beta-D-galactosyl-sn-glycerol + H2O = octanoyl-3-(beta-D-galactosyl)-sn-glycerol + octanoate + H(+). It catalyses the reaction 1,2-didodecanoyl-3-beta-D-galactosyl-sn-glycerol + H2O = dodecanoyl-3-beta-D-galactosyl-sn-glycerol + dodecanoate + H(+). It carries out the reaction 1-beta-D-galactosyl-2,3-didodecanoyl-sn-glycerol + H2O = 1-beta-D-galactosyl-dodecanoyl-sn-glycerol + dodecanoate + H(+). The enzyme catalyses a 1,2-diacyl-3-O-[alpha-D-galactosyl-(1-&gt;6)-beta-D-galactosyl]-sn-glycerol + H2O = acyl-3-O-[alpha-D-galactosyl-(1-&gt;6)-beta-D-galactosyl]-sn-glycerol + a fatty acid + H(+). The catalysed reaction is long chain 1,2-diacyl-3-O-[alpha-D-galactosyl-(1-&gt;6)-beta-D-galactosyl]-sn-glycerol + H2O = long chain acyl-3-O-[alpha-D-galactosyl-(1-&gt;6)-beta-D-galactosyl]-sn-glycerol + a fatty acid + H(+). It catalyses the reaction 1,2-dioctanoyl-3-O-[alpha-D-galactosyl-(1-&gt;6)-beta-D-galactosyl]-sn-glycerol + H2O = octanoyl-3-O-[alpha-D-galactosyl-(1-&gt;6)-beta-D-galactosyl]-sn-glycerol + octanoate + H(+). It carries out the reaction 1,2-didodecanoyl-3-O-[alpha-D-galactosyl-(1-&gt;6)-beta-D-galactosyl]-sn-glycerol + H2O = dodecanoyl-3-O-[alpha-D-galactosyl-(1-&gt;6)-beta-D-galactosyl]-sn-glycerol + dodecanoate + H(+). The enzyme catalyses a 1,2-diacyl-sn-glycero-3-phosphocholine + H2O = a monoacyl-sn-glycero-3-phosphocholine + a fatty acid + H(+). Its pathway is glycerolipid metabolism; triacylglycerol degradation. It participates in glycolipid metabolism. Triacylglycerol lipase activity is inhibited by increasing bile salts concentrations and not reactivated by CLPS. In terms of biological role, lipase that primarily hydrolyzes triglycerides and galactosylglycerides. In neonates, may play a major role in pancreatic digestion of dietary fats such as milk fat globules enriched in long-chain triglycerides. Hydrolyzes short-, medium- and long-chain fatty acyls in triglycerides without apparent positional specificity. Can completely deacylate triacylglycerols. When the liver matures and bile salt synthesis increases, likely functions mainly as a galactolipase and monoacylglycerol lipase. Hydrolyzes monogalactosyldiglycerols (MGDG) and digalactosyldiacylglycerols (DGDG) present in a plant-based diet, releasing long-chain polyunsaturated fatty acids. Hydrolyzes medium- and long-chain fatty acyls in galactolipids. May act together with LIPF to hydrolyze partially digested triglycerides. Hydrolyzes long-chain monoglycerides with high efficiency. In cytotoxic T cells, contributes to perforin-dependent cell lysis, but is unlikely to mediate direct cytotoxicity. Also has low phospholipase activity. In neurons, required for the localization of the phospholipid 1-oleoyl-2-palmitoyl-PC (OPPC) to neurite tips through acyl chain remodeling of membrane phospholipids. The resulting OPPC-rich lipid membrane domain recruits the t-SNARE protein STX4 by selectively interacting with the STX4 transmembrane domain and this promotes surface expression of the dopamine transporter SLC6A3/DAT at neurite tips by facilitating fusion of SLC6A3-containing transport vesicles with the plasma membrane. The protein is Pancreatic lipase-related protein 2 of Myocastor coypus (Coypu).